Consider the following 476-residue polypeptide: Proline dehydrogenase 2, mitochondrial (476 aa).

The transit peptide at Met-1–Glu-29 directs the protein to the mitochondrion.

This sequence belongs to the proline oxidase family. The cofactor is FAD. In terms of tissue distribution, expressed in the vascular tissue and in the abscission zone of petals, sepals, stamina, pistils and siliques. Not detected in petioles.

The protein localises to the mitochondrion. It catalyses the reaction L-proline + a quinone = (S)-1-pyrroline-5-carboxylate + a quinol + H(+). The protein operates within amino-acid degradation; L-proline degradation into L-glutamate; L-glutamate from L-proline: step 1/2. In terms of biological role, converts proline to delta-1-pyrroline-5-carboxylate. This Arabidopsis thaliana (Mouse-ear cress) protein is Proline dehydrogenase 2, mitochondrial (POX2).